The chain runs to 423 residues: Steroid hormone receptor ERR1 (423 aa).

The disordered stretch occupies residues 1–67; the sequence is MSSQVVGIEP…GAGPGEQGGG (67 aa). The interval 1–76 is repressor domain; that stretch reads MSSQVVGIEP…GKLVLSSLPK (76 aa). Residue K14 forms a Glycyl lysine isopeptide (Lys-Gly) (interchain with G-Cter in SUMO) linkage. Phosphoserine is present on residues S19 and S22. Residues 58–67 are compositionally biased toward gly residues; sequence GAGPGEQGGG. A DNA-binding region (nuclear receptor) is located at residues 76 to 151; the sequence is KRLCLVCGDV…VGMLKEGVRL (76 aa). 2 consecutive NR C4-type zinc fingers follow at residues 79–99 and 115–134; these read CLVC…CEAC and CPAS…CQAC. An N6-acetyllysine; by PCAF/KAT2B mark is found at K129, K138, K160, and K162. A Glycyl lysine isopeptide (Lys-Gly) (interchain with G-Cter in SUMO2) cross-link involves residue K189. Positions 193–421 constitute an NR LBD domain; that stretch reads PVNALVSHLL…KLFLEMLEAM (229 aa). Residue K403 forms a Glycyl lysine isopeptide (Lys-Gly) (interchain with G-Cter in SUMO); alternate linkage. K403 participates in a covalent cross-link: Glycyl lysine isopeptide (Lys-Gly) (interchain with G-Cter in SUMO2); alternate. The tract at residues 403–423 is AF-2 domain; that stretch reads KLEGKVPMHKLFLEMLEAMMD.

Belongs to the nuclear hormone receptor family. NR3 subfamily. Binds DNA as a monomer or a homodimer. Interacts (via the AF2 domain) with coactivator PPARGC1A (via the L3 motif); the interaction greatly enhances transcriptional activity of genes involved in energy metabolism. Interacts with PIAS4; the interaction enhances sumoylation. Interacts with MAPK15; promotes re-localization of ESRRA to the cytoplasm through a XPO1-dependent mechanism then inhibits ESRRA transcriptional activity. Phosphorylation on Ser-19 enhances sumoylation on Lys-14 increasing repression of transcriptional activity. In terms of processing, sumoylated with SUMO2. Main site is Lys-14 which is enhanced by phosphorylation on Ser-19, cofactor activation, and by interaction with PIAS4. Sumoylation enhances repression of transcriptional activity, but has no effect on subcellular location nor on DNA binding. Post-translationally, reversibly acetylated. Acetylation by PCAF/KAT2 at Lys-129, Lys-138, Lys-160 and Lys-162 and PCAF/KAT2 decreases transcriptional activity probably by inhibiting DNA-binding activity; deacetylation involves SIRT1 and HDAC8 and increases DNA-binding.

It localises to the nucleus. The protein localises to the cytoplasm. Its function is as follows. Binds to an ERR-alpha response element (ERRE) containing a single consensus half-site, 5'-TNAAGGTCA-3'. Can bind to the medium-chain acyl coenzyme A dehydrogenase (MCAD) response element NRRE-1 and may act as an important regulator of MCAD promoter. Binds to the C1 region of the lactoferrin gene promoter. Requires dimerization and the coactivator, PGC-1A, for full activity. The ERRalpha/PGC1alpha complex is a regulator of energy metabolism. Induces the expression of PERM1 in the skeletal muscle. The sequence is that of Steroid hormone receptor ERR1 (ESRRA) from Homo sapiens (Human).